We begin with the raw amino-acid sequence, 667 residues long: DNA ligase (667 aa).

NAD(+) is bound by residues 32-36, 81-82, and Glu-110; these read DSEYD and SL. Lys-112 (N6-AMP-lysine intermediate) is an active-site residue. Residues Arg-133, Glu-167, Lys-283, and Lys-307 each contribute to the NAD(+) site. Zn(2+)-binding residues include Cys-401, Cys-404, Cys-419, and Cys-424. In terms of domain architecture, BRCT spans 586-667; it reads EGHPEFSGKT…FVDKQNELNS (82 aa).

Belongs to the NAD-dependent DNA ligase family. LigA subfamily. Mg(2+) serves as cofactor. The cofactor is Mn(2+).

The enzyme catalyses NAD(+) + (deoxyribonucleotide)n-3'-hydroxyl + 5'-phospho-(deoxyribonucleotide)m = (deoxyribonucleotide)n+m + AMP + beta-nicotinamide D-nucleotide.. Its function is as follows. DNA ligase that catalyzes the formation of phosphodiester linkages between 5'-phosphoryl and 3'-hydroxyl groups in double-stranded DNA using NAD as a coenzyme and as the energy source for the reaction. It is essential for DNA replication and repair of damaged DNA. The polypeptide is DNA ligase (Staphylococcus aureus (strain Mu3 / ATCC 700698)).